Consider the following 175-residue polypeptide: NADH-ubiquinone oxidoreductase chain 6 (175 aa).

Helical transmembrane passes span Met1–Ser21, Ser25–Leu45, Phe47–Val67, Ala88–Leu108, and Tyr149–Met169.

Belongs to the complex I subunit 6 family. Core subunit of respiratory chain NADH dehydrogenase (Complex I) which is composed of 45 different subunits.

It localises to the mitochondrion inner membrane. It carries out the reaction a ubiquinone + NADH + 5 H(+)(in) = a ubiquinol + NAD(+) + 4 H(+)(out). Functionally, core subunit of the mitochondrial membrane respiratory chain NADH dehydrogenase (Complex I) which catalyzes electron transfer from NADH through the respiratory chain, using ubiquinone as an electron acceptor. Essential for the catalytic activity and assembly of complex I. In Bos mutus grunniens (Wild yak), this protein is NADH-ubiquinone oxidoreductase chain 6 (MT-ND6).